We begin with the raw amino-acid sequence, 149 residues long: Cytochrome c-type biogenesis protein CcmE (149 aa).

The Cytoplasmic portion of the chain corresponds to 1–7 (MKPRHKK). A helical; Signal-anchor for type II membrane protein transmembrane segment spans residues 8–28 (MAVIALSVSALTVAVVLVLNA). Residues 29-149 (FQSNLVFFFS…AKAQKTSLAQ (121 aa)) lie on the Periplasmic side of the membrane. Heme-binding residues include His-123 and Tyr-127.

It belongs to the CcmE/CycJ family.

The protein localises to the cell inner membrane. In terms of biological role, heme chaperone required for the biogenesis of c-type cytochromes. Transiently binds heme delivered by CcmC and transfers the heme to apo-cytochromes in a process facilitated by CcmF and CcmH. The sequence is that of Cytochrome c-type biogenesis protein CcmE from Nitrosomonas europaea (strain ATCC 19718 / CIP 103999 / KCTC 2705 / NBRC 14298).